The primary structure comprises 375 residues: Methylthioribose-1-phosphate isomerase (375 aa).

D257 (proton donor) is an active-site residue.

This sequence belongs to the eIF-2B alpha/beta/delta subunits family. MtnA subfamily.

Its subcellular location is the cytoplasm. The protein localises to the nucleus. The catalysed reaction is 5-(methylsulfanyl)-alpha-D-ribose 1-phosphate = 5-(methylsulfanyl)-D-ribulose 1-phosphate. It participates in amino-acid biosynthesis; L-methionine biosynthesis via salvage pathway; L-methionine from S-methyl-5-thio-alpha-D-ribose 1-phosphate: step 1/6. In terms of biological role, catalyzes the interconversion of methylthioribose-1-phosphate (MTR-1-P) into methylthioribulose-1-phosphate (MTRu-1-P). In Leishmania major, this protein is Methylthioribose-1-phosphate isomerase.